A 1977-amino-acid polypeptide reads, in one-letter code: Voltage-dependent L-type calcium channel subunit alpha-1F (1977 aa).

Positions 1 to 11 (MSESEGGKDTT) are enriched in basic and acidic residues. Residues 1 to 60 (MSESEGGKDTTPEPSPANGAGPGPEWGLCPGPPAVEGESSGASGLGTPKRRNQHSKHKTV) form a disordered region. Topologically, residues 1–92 (MSESEGGKDT…RSCISIVEWK (92 aa)) are cytoplasmic. Over residues 48 to 59 (PKRRNQHSKHKT) the composition is skewed to basic residues. The I repeat unit spans residues 79–375 (NPLRRSCISI…LVLGVLSGEF (297 aa)). The chain crosses the membrane as a helical span at residues 93–111 (PFDILILLTIFANCVALGV). Residues 112–129 (YIPFPEDDSNTANHNLEQ) lie on the Extracellular side of the membrane. Residues 130–149 (VEYVFLVIFTVETVLKIVAY) form a helical membrane-spanning segment. Residues 150–161 (GLVLHPSAYIRN) lie on the Cytoplasmic side of the membrane. A helical transmembrane segment spans residues 162–180 (GWNLLDFIIVVVGLFSVLL). Residues 181-201 (EQGPGRPGDAPHTGGKPGGFD) are Extracellular-facing. The helical transmembrane segment at 202-220 (VKALRAFRVLRPLRLVSGV) threads the bilayer. Residues 221–239 (PSLHIVLNSIMKALVPLLH) lie on the Cytoplasmic side of the membrane. A helical membrane pass occupies residues 240–259 (IALLVLFVIIIYAIIGLELF). Residues 260–347 (LGRMHKTCYF…WMQDAMGYEL (88 aa)) lie on the Extracellular side of the membrane. A glycan (N-linked (GlcNAc...) asparagine) is linked at N295. E330 is a binding site for Ca(2+). A helical membrane pass occupies residues 348-372 (PWVYFVSLVIFGSFFVLNLVLGVLS). Residues 373–529 (GEFSKEREKA…ARCRRAVKSN (157 aa)) lie on the Cytoplasmic side of the membrane. The binding to the beta subunit stretch occupies residues 395-412 (QQMEEDLRGYLDWITQAE). 2 disordered regions span residues 418 to 441 (DPSA…PQLA) and 455 to 488 (SHST…EDEE). A compositionally biased stretch (low complexity) spans 455-469 (SHSTRSTHSTSSHAS). Residues 515–761 (NRVLRARCRR…VFLAIAVDNL (247 aa)) form an II repeat. Residues 530–549 (ACYWAVLLLVFLNTLTIASE) traverse the membrane as a helical segment. The Extracellular portion of the chain corresponds to 550–564 (HHGQPVWLTQIQEYA). The chain crosses the membrane as a helical span at residues 565 to 583 (NKVLLCLFTVEMLLKLYGL). Residues 584-591 (GPSAYVSS) are Cytoplasmic-facing. The helical transmembrane segment at 592-610 (FFNRFDCFVVCGGILETTL) threads the bilayer. The Extracellular portion of the chain corresponds to 611–620 (VEVGAMQPLG). The chain crosses the membrane as a helical span at residues 621–639 (ISVLRCVRLLRIFKVTRHW). The Cytoplasmic segment spans residues 640-658 (ASLSNLVASLLNSMKSIAS). A helical membrane pass occupies residues 659-679 (LLLLLFLFIIIFSLLGMQLFG). Topologically, residues 680-733 (GKFNFDQTHTKRSTFDTFPQALLTVFQILTGEDWNVVMYDGIMAYGGPFFPGML) are extracellular. E711 is a Ca(2+) binding site. Residues 734–758 (VCIYFIILFICGNYILLNVFLAIAV) traverse the membrane as a helical segment. Residues 759–871 (DNLASGDAGT…KGCHTLIHHH (113 aa)) lie on the Cytoplasmic side of the membrane. The tract at residues 767–830 (GTAKDKGGEK…EEEEEGAGGV (64 aa)) is disordered. Positions 768–783 (TAKDKGGEKSNEKDLP) are enriched in basic and acidic residues. A compositionally biased stretch (acidic residues) spans 807-826 (DMEEEEEEEEEEEEEEEEEG). The III repeat unit spans residues 858-1140 (NPLRKGCHTL…IFVGFVIITF (283 aa)). A helical transmembrane segment spans residues 872–890 (VFTNLILVFIILSSVSLAA). The Extracellular portion of the chain corresponds to 891–906 (EDPIRAHSFRNHILGY). The chain crosses the membrane as a helical span at residues 907-926 (FDYAFTSIFTVEILLKMTVF). Residues 927-938 (GAFLHRGSFCRS) lie on the Cytoplasmic side of the membrane. Residues 939–957 (WFNMLDLLVVSVSLISFGI) form a helical membrane-spanning segment. Topologically, residues 958–963 (HSSAIS) are extracellular. The helical transmembrane segment at 964–983 (VVKILRVLRVLRPLRAINRA) threads the bilayer. Over 984–1002 (KGLKHVVQCVFVAIRTIGN) the chain is Cytoplasmic. Residues 1003-1022 (IMIVTTLLQFMFACIGVQLF) form a helical membrane-spanning segment. Topologically, residues 1023-1112 (KGKFYTCTDE…HGPIYNYRVE (90 aa)) are extracellular. The tract at residues 1060–1150 (RLWVNSDFNF…RAQGEQEYQN (91 aa)) is dihydropyridine binding. E1086 serves as a coordination point for Ca(2+). Residues 1113–1133 (ISVFFIVYIIIIAFFMMNIFV) traverse the membrane as a helical segment. Topologically, residues 1134 to 1190 (GFVIITFRAQGEQEYQNCELDKNQRQCVEYALKAQPLRRYIPKNPHQYRVWATVNSA) are cytoplasmic. Residues 1177–1444 (NPHQYRVWAT…LFVAVIMDNF (268 aa)) form an IV repeat. A helical transmembrane segment spans residues 1191-1209 (AFEYLMFLLILLNTVALAM). Residues 1210–1224 (QHYEQTAPFNYAMDI) lie on the Extracellular side of the membrane. Residues 1225–1244 (LNMVFTGLFTIEMVLKIIAF) form a helical membrane-spanning segment. Topologically, residues 1245–1251 (KPKHYFT) are cytoplasmic. Residues 1252–1273 (DAWNTFDALIVVGSIVDIAVTE) form a helical membrane-spanning segment. Over 1274–1290 (VNNGGHLGESSEDSSRI) the chain is Extracellular. The helical transmembrane segment at 1291 to 1310 (SITFFRLFRVMRLVKLLSKG) threads the bilayer. Residues 1311-1329 (EGIRTLLWTFIKSFQALPY) are Cytoplasmic-facing. The helical transmembrane segment at 1330–1349 (VALLIAMIFFIYAVIGMQMF) threads the bilayer. Topologically, residues 1350–1416 (GKVALQDGTQ…GEEFTCGSNF (67 aa)) are extracellular. The dihydropyridine binding stretch occupies residues 1397–1463 (RCDPESDFGP…LGPHHLDEFK (67 aa)). The interval 1409 to 1452 (EFTCGSNFAIAYFISFFMLCAFLIINLFVAVIMDNFDYLTRDWS) is phenylalkylamine binding. Residues 1417 to 1441 (AIAYFISFFMLCAFLIINLFVAVIM) form a helical membrane-spanning segment. Residues 1442–1977 (DNFDYLTRDW…GDEMACVHAL (536 aa)) are Cytoplasmic-facing. Disordered stretches follow at residues 1637–1754 (CDTE…EVPD) and 1816–1841 (DLPI…WATP). A compositionally biased stretch (acidic residues) spans 1638 to 1657 (DTEEEEEEGQEGVEEEDEKD). Composition is skewed to polar residues over residues 1661-1670 (NKATMVSQPS), 1702-1716 (TPTS…AGSN), 1733-1743 (GNSQPKGTKGQ), and 1829-1840 (SGPNRAQGSWAT).

It belongs to the calcium channel alpha-1 subunit (TC 1.A.1.11) family. CACNA1F subfamily. Voltage-dependent calcium channels are multisubunit complexes, consisting of alpha-1, alpha-2, beta and delta subunits in a 1:1:1:1 ratio. The channel activity is directed by the pore-forming and voltage-sensitive alpha-1 subunit. In many cases, this subunit is sufficient to generate voltage-sensitive calcium channel activity. The auxiliary subunits beta and alpha-2/delta linked by a disulfide bridge regulate the channel activity. Interacts (via IQ domain) with CABP4; in a calcium independent manner. In terms of assembly, interacts with CABP4; suppresses robust calcium-dependent inactivation of channel without enhancing the hyperpolarized voltage-dependent activation. In terms of tissue distribution, expression in skeletal muscle and retina. Isoform 4 is expressed in retina.

The protein localises to the membrane. It catalyses the reaction Ca(2+)(in) = Ca(2+)(out). In terms of biological role, voltage-sensitive calcium channels (VSCC) mediate the entry of calcium ions into excitable cells and are also involved in a variety of calcium-dependent processes, including muscle contraction, hormone or neurotransmitter release, gene expression, cell motility, cell division and cell death. The isoform alpha-1F gives rise to L-type calcium currents. Long-lasting (L-type) calcium channels belong to the 'high-voltage activated' (HVA) group. They are blocked by dihydropyridines (DHP), phenylalkylamines, and by benzothiazepines. Activates at more negative voltages and does not undergo calcium-dependent inactivation (CDI), due to incoming calcium ions, during depolarization. Its function is as follows. Voltage-dependent L-type calcium channel activates at more hyperpolarized voltages and exhibits a robust calcium-dependent inactivation (CDI), due to incoming calcium ions, during depolarizations. Functionally, voltage-sensitive calcium channels (VSCC) mediate the entry of calcium ions into excitable cells and are also involved in a variety of calcium-dependent processes, including muscle contraction, hormone or neurotransmitter release, gene expression, cell motility, cell division and cell death. This Homo sapiens (Human) protein is Voltage-dependent L-type calcium channel subunit alpha-1F.